The following is a 161-amino-acid chain: Small ribosomal subunit protein uS9 (161 aa).

The protein belongs to the universal ribosomal protein uS9 family.

In Bartonella henselae (strain ATCC 49882 / DSM 28221 / CCUG 30454 / Houston 1) (Rochalimaea henselae), this protein is Small ribosomal subunit protein uS9.